A 933-amino-acid chain; its full sequence is Phosphoenolpyruvate carboxylase (933 aa).

Residues His164 and Lys595 contribute to the active site.

It belongs to the PEPCase type 1 family. It depends on Mg(2+) as a cofactor.

It carries out the reaction oxaloacetate + phosphate = phosphoenolpyruvate + hydrogencarbonate. Its function is as follows. Forms oxaloacetate, a four-carbon dicarboxylic acid source for the tricarboxylic acid cycle. This is Phosphoenolpyruvate carboxylase from Rhodopseudomonas palustris (strain BisB5).